The following is a 556-amino-acid chain: Beta-caryophyllene synthase TPS9FN (556 aa).

Arg-273, Asp-310, Asp-314, Arg-451, and Asp-454 together coordinate (2E,6E)-farnesyl diphosphate. Positions 310 and 314 each coordinate Mg(2+). A DDXXD motif motif is present at residues 310–314 (DDIYD). Mg(2+)-binding residues include Asp-454, Ser-458, and Glu-462.

It belongs to the terpene synthase family. Tpsb subfamily. Mg(2+) serves as cofactor. The cofactor is Mn(2+). Expressed in glandular trichomes two to four weeks after flowering onset.

It carries out the reaction (2E,6E)-farnesyl diphosphate = (-)-(E)-beta-caryophyllene + diphosphate. The catalysed reaction is (2E,6E)-farnesyl diphosphate = alpha-humulene + diphosphate. It participates in secondary metabolite biosynthesis; terpenoid biosynthesis. In terms of biological role, involved in sesquiterpene olefins biosynthesis, constituants of cannabinoids and terpenoids-rich resins. Catalyzes mainly the conversion of (2E)-farnesyl diphosphate to beta-caryophyllene and alpha-humulene. Can also use (2E)-geranyl diphosphate as substrate with low efficiency. This Cannabis sativa (Hemp) protein is Beta-caryophyllene synthase TPS9FN.